We begin with the raw amino-acid sequence, 208 residues long: Ribosomal RNA small subunit methyltransferase G (208 aa).

Residues Gly73, Leu78, 124 to 125 (VE), and Arg139 each bind S-adenosyl-L-methionine.

The protein belongs to the methyltransferase superfamily. RNA methyltransferase RsmG family.

The protein resides in the cytoplasm. The catalysed reaction is guanosine(527) in 16S rRNA + S-adenosyl-L-methionine = N(7)-methylguanosine(527) in 16S rRNA + S-adenosyl-L-homocysteine. Specifically methylates the N7 position of guanine in position 527 of 16S rRNA. The sequence is that of Ribosomal RNA small subunit methyltransferase G from Aeromonas salmonicida (strain A449).